A 431-amino-acid polypeptide reads, in one-letter code: MIERYSRDEMSSIWTDQNRYEAWLEVEILACEAWSELGYIPKEDVKKIRENAKVNVERAKEIEQETRHDVVAFTRQVSETLGDERKWVHYGLTSTDVVDTALSYVIKQANEILEKDLERFIDVLAAKAKKYQYTLMMGRTHGVHAEPTTFGVKMALWYTEMKRNLKRFKEVRKEIEVGKMSGAVGTFANIPPEIEAYVCEHLGIDTAAVSTQTLQRDRHAYYIATLALIATSMEKFAVEIRNLQKTETREVEEAFAKGQKGSSAMPHKRNPIGSENITGISRVIRGYITTAYENIPLWHERDISHSSAERIMLPDVTIALDYALNRFTNIVDRLTVYEDNMRNNIDKTYGLIFSQRVLLALINKGMVREEAYDKVQPKAMESWETKTPFRELIEQDSSITDVLSSEELDDCFDPKHHLNQVDTIFARAGLS.

N(6)-(1,2-dicarboxyethyl)-AMP is bound by residues 4–5 (RY), 67–69 (RHD), and 93–94 (TS). Histidine 141 functions as the Proton donor/acceptor in the catalytic mechanism. Glutamine 212 contributes to the N(6)-(1,2-dicarboxyethyl)-AMP binding site. The active-site Proton donor/acceptor is serine 262. N(6)-(1,2-dicarboxyethyl)-AMP-binding positions include serine 263, 268–270 (KRN), asparagine 276, and 307–311 (SAERI).

The protein belongs to the lyase 1 family. Adenylosuccinate lyase subfamily. In terms of assembly, homodimer and homotetramer. Residues from neighboring subunits contribute catalytic and substrate-binding residues to each active site.

It carries out the reaction N(6)-(1,2-dicarboxyethyl)-AMP = fumarate + AMP. The enzyme catalyses (2S)-2-[5-amino-1-(5-phospho-beta-D-ribosyl)imidazole-4-carboxamido]succinate = 5-amino-1-(5-phospho-beta-D-ribosyl)imidazole-4-carboxamide + fumarate. The protein operates within purine metabolism; AMP biosynthesis via de novo pathway; AMP from IMP: step 2/2. It functions in the pathway purine metabolism; IMP biosynthesis via de novo pathway; 5-amino-1-(5-phospho-D-ribosyl)imidazole-4-carboxamide from 5-amino-1-(5-phospho-D-ribosyl)imidazole-4-carboxylate: step 2/2. Functionally, catalyzes two reactions in de novo purine nucleotide biosynthesis. Catalyzes the breakdown of 5-aminoimidazole- (N-succinylocarboxamide) ribotide (SAICAR or 2-[5-amino-1-(5-phospho-beta-D-ribosyl)imidazole-4-carboxamido]succinate) to 5-aminoimidazole-4-carboxamide ribotide (AICAR or 5-amino-1-(5-phospho-beta-D-ribosyl)imidazole-4-carboxamide) and fumarate, and of adenylosuccinate (ADS or N(6)-(1,2-dicarboxyethyl)-AMP) to adenosine monophosphate (AMP) and fumarate. In Staphylococcus epidermidis (strain ATCC 35984 / DSM 28319 / BCRC 17069 / CCUG 31568 / BM 3577 / RP62A), this protein is Adenylosuccinate lyase (purB).